A 632-amino-acid chain; its full sequence is DNA polymerase eta (632 aa).

The UmuC domain occupies 26–309 (IAHIDMNAFF…FEITSFWTLG (284 aa)). Residues Asp30 and Asp155 each coordinate Mg(2+). The UBZ3-type zinc-finger motif lies at 545–580 (EKTPKLECCKYQVTFTDQKALQEHADYHLALKLSEG). Positions 552, 553, 568, and 572 each coordinate Zn(2+). Positions 598–632 (LLFSRKRPNSQHTATPQKKQVTSSKNILSFFTRKK) are disordered. The span at 607–626 (SQHTATPQKKQVTSSKNILS) shows a compositional bias: polar residues. The interval 625–632 (LSFFTRKK) is POL30-binding.

This sequence belongs to the DNA polymerase type-Y family. In terms of assembly, interacts with POL30. This interaction is essential for the polymerase eta function.

It localises to the nucleus. The enzyme catalyses DNA(n) + a 2'-deoxyribonucleoside 5'-triphosphate = DNA(n+1) + diphosphate. DNA polymerase specifically involved in DNA repair. Plays an important role in translesion synthesis, where the normal high fidelity DNA polymerases cannot proceed and DNA synthesis stalls. Plays an important role in the repair of UV-induced pyrimidine dimers. Depending on the context, it inserts the correct base, but causes frequent base transitions and transversions. Efficiently incorporates nucleotides opposite to other UV or oxidative DNA damages like O(6)-methylguanine, 7,8-dihydro-8-oxoguanine, 2,6-diamino-4-hydroxy-5-formamidopyrimidine of 2'-deoxyguanosine (FaPydG), or p-benzoquinone DNA adducts. This chain is DNA polymerase eta (RAD30), found in Saccharomyces cerevisiae (strain ATCC 204508 / S288c) (Baker's yeast).